Here is a 229-residue protein sequence, read N- to C-terminus: ATP-dependent dethiobiotin synthetase BioD (229 aa).

15 to 20 is a binding site for ATP; the sequence is EIGKTL. Thr-19 lines the Mg(2+) pocket. The active site involves Lys-40. ATP-binding positions include Asp-57, 118–121, and 207–209; these read EGVG and PRL. Positions 57 and 118 each coordinate Mg(2+).

It belongs to the dethiobiotin synthetase family. As to quaternary structure, homodimer. Mg(2+) is required as a cofactor.

Its subcellular location is the cytoplasm. It catalyses the reaction (7R,8S)-7,8-diammoniononanoate + CO2 + ATP = (4R,5S)-dethiobiotin + ADP + phosphate + 3 H(+). It functions in the pathway cofactor biosynthesis; biotin biosynthesis; biotin from 7,8-diaminononanoate: step 1/2. In terms of biological role, catalyzes a mechanistically unusual reaction, the ATP-dependent insertion of CO2 between the N7 and N8 nitrogen atoms of 7,8-diaminopelargonic acid (DAPA, also called 7,8-diammoniononanoate) to form a ureido ring. The sequence is that of ATP-dependent dethiobiotin synthetase BioD from Ralstonia nicotianae (strain ATCC BAA-1114 / GMI1000) (Ralstonia solanacearum).